A 1248-amino-acid chain; its full sequence is MHLLRTQPGGFVPDDGIAHLAQTPAELVILCSGDSHLALLAEAARALPDDYPSLRLANPMQLQNHASVDLYVEEVLRHARVILLSLHGGIGYWRYGVEQLVALAERGALLIPVPGDDRPDPELSALGNLPAEQAERFWQYLRQGGLENAGQFYRCLASQCLGRDYAWREPQALPRVALFHPRHAEATLEHWRADWQAGRPVVALLFYRTHLQAANTAFIARFCERLAAQGLNPLPIALASLKESACLAQVEDWLERSDAALIVNTTGFAQSNPEAPELRPFRRDVPVLQAICSLDNRPLWLDNPQGLGPRDLAMHVALPELDGRIVTRPISFKGLAWRSERSESDVVCYLADDERMDFVAELARRWAELARKPNAEKRVALVLANYPTRDGRIGNGVGLDTPAAALNILRALRQQGYPVDGLPASGTELIRQLLGGVSNDLEHLDLRPCAQSLALDDYLACFARLPERNRQAVLARWGEPQQDPMFRDGRMMVAGLRYGLTFVGIQPARGYQLDPAAVYHDPDLVPPHGYLAFYFWLRHAYRADALLHVGKHGNLEWLPGKGVGLSAECWPDALLGPLPNIYPFIVNDPGEGAQAKRRTQAVIIDHLMPPLTRAESYGPLRDLERLADEFYDASLLDPRRAEQLRGEILVLLRDNRLDREIGLQLSDDPDSWLPQLDAYLCDLKESQIRDGLHVFGESPSGRLRLDTLLALLRVPRGDGKGANAGLLKSLADDLGLGFDPLACDMGEAWQGARPACLEERGGEPWRTLGDTRERLELLALHWIERCLGGESPPATWRASGEVLRGLCEQVAPTLDACGGAEIDGLLAALEGRFVPAGPSGAPSRGRLDVLPTGRNFFSVDVRNLPTPTAWRIGFQSANLLLERHLQEHGDHLRQLGLSVWGTATMRTGGDDIAQALALLGVRPVWQAGSQRVADFEILPVSLLDRPRVDVTLRVSGFFRDAFANLIRLFDAAVQAVAELDEAEELNPLAARVRLERQRLEAQGTAPAEARRQAGWRIFGAKPGAYGAGVQGAIEERLWETRADLAEVYLNWGGYAYGAADDGTPARERFAQRLERLQAVLHNQDNREHDLLDSNDYYQFQGGMLAAVETLRGAPVASYHGDHSQPDNPRIRTLKEELNRVVRARAVNPKWIAGMKRHGYKGAFELAATVDYLCAFDATSELIDDHQYALLADAYLLDAETREFVRQHNPQALRDMAERLVEAQRRGLWQEPGAYREALENLLLDVEEE.

Belongs to the CobN family. In terms of assembly, heterotrimer of CobN, CobS and CobT.

Its subcellular location is the cytoplasm. It carries out the reaction hydrogenobyrinate a,c-diamide + Co(2+) + ATP + H2O = cob(II)yrinate a,c diamide + ADP + phosphate + 5 H(+). Its pathway is cofactor biosynthesis; adenosylcobalamin biosynthesis; cob(II)yrinate a,c-diamide from precorrin-2 (aerobic route): step 10/10. Catalyzes cobalt insertion in the corrin ring. This chain is Aerobic cobaltochelatase subunit CobN (cobN), found in Pseudomonas aeruginosa (strain ATCC 15692 / DSM 22644 / CIP 104116 / JCM 14847 / LMG 12228 / 1C / PRS 101 / PAO1).